Consider the following 818-residue polypeptide: Phosphoenolpyruvate synthase (818 aa).

His-442 (tele-phosphohistidine intermediate) is an active-site residue. Substrate is bound by residues Arg-532, Arg-601, Glu-703, Gly-724, Ser-725, Asn-726, and Asp-727. Position 703 (Glu-703) interacts with Mg(2+). Asp-727 provides a ligand contact to Mg(2+). The active-site Proton donor is Cys-774.

It belongs to the PEP-utilizing enzyme family. It depends on Mg(2+) as a cofactor.

The enzyme catalyses pyruvate + ATP + H2O = phosphoenolpyruvate + AMP + phosphate + 2 H(+). Its pathway is carbohydrate biosynthesis; gluconeogenesis. Its function is as follows. Catalyzes the phosphorylation of pyruvate to phosphoenolpyruvate. This is Phosphoenolpyruvate synthase (ppsA) from Synechocystis sp. (strain ATCC 27184 / PCC 6803 / Kazusa).